A 553-amino-acid polypeptide reads, in one-letter code: Putative transport protein KPN78578_40470 (553 aa).

A run of 5 helical transmembrane segments spans residues 4–24 (IALTVSVLALVAVVGLWIGNV), 28–48 (GVGFGIGGVLFGGIIVGHFVD), 65–85 (FGLILFVYTIGIQVGPGFFAS), 95–115 (LFAILIVILGGLVTAVLHKLF), and 158–178 (MSYAMAYPFGICGILLTMWLV). 2 RCK C-terminal domains span residues 192 to 276 (RFEE…VIGQ) and 279 to 361 (ATSL…ELGN). The next 6 helical transmembrane spans lie at 371–391 (MLPVFIGIGLGVLLGSIPLFI), 403–425 (AGGPLIMALILGRIGSIGKLYWF), 437–457 (LGIVLFLAVVGLKSGGDFVAT), 464–484 (LSWIAYGIFITAIPLLTVGVL), 493–513 (YLTLCGMLAGSMTDPPALAFA), and 532–552 (PLVMFLRIITPQLLAVLFWGL).

The protein belongs to the AAE transporter (TC 2.A.81) family. YidE subfamily.

The protein resides in the cell membrane. The protein is Putative transport protein KPN78578_40470 of Klebsiella pneumoniae subsp. pneumoniae (strain ATCC 700721 / MGH 78578).